Here is a 422-residue protein sequence, read N- to C-terminus: Protein MANNAN SYNTHESIS-RELATED 1 (422 aa).

Residues Met1–Arg6 are Cytoplasmic-facing. A helical; Signal-anchor for type II membrane protein transmembrane segment spans residues Gln7–His26. Topologically, residues Arg27–Cys422 are lumenal. Asp263–Arg265 lines the substrate pocket.

This sequence belongs to the glycosyltransferase GT106 family. Widely expressed.

The protein resides in the golgi apparatus membrane. Its pathway is glycan biosynthesis. Functionally, glycosyltransferase involved in mannan biosynthesis. The protein is Protein MANNAN SYNTHESIS-RELATED 1 of Arabidopsis thaliana (Mouse-ear cress).